The chain runs to 142 residues: Hemoglobin subunit alpha-1 (142 aa).

The Globin domain occupies 2-142; that stretch reads VLSPADKTNI…VSTVLTSKYR (141 aa). Residue histidine 59 coordinates O2. Histidine 88 provides a ligand contact to heme b.

The protein belongs to the globin family. In terms of assembly, heterotetramer of two alpha chains and two beta chains. Red blood cells.

Functionally, involved in oxygen transport from the lung to the various peripheral tissues. This chain is Hemoglobin subunit alpha-1, found in Arctocephalus galapagoensis (Galapagoes fur seal).